A 527-amino-acid polypeptide reads, in one-letter code: Phosphoenolpyruvate carboxykinase (ATP) (527 aa).

Substrate is bound by residues R56, Y191, and K197. Residues K197, H216, and 232–240 (GLSGTGKTT) each bind ATP. K197 and H216 together coordinate Mn(2+). Position 253 (D253) interacts with Mn(2+). Residues E281, R318, 437 to 438 (RI), and T443 contribute to the ATP site. R318 lines the substrate pocket.

Belongs to the phosphoenolpyruvate carboxykinase (ATP) family. Mn(2+) is required as a cofactor.

Its subcellular location is the cytoplasm. The enzyme catalyses oxaloacetate + ATP = phosphoenolpyruvate + ADP + CO2. It functions in the pathway carbohydrate biosynthesis; gluconeogenesis. Functionally, involved in the gluconeogenesis. Catalyzes the conversion of oxaloacetate (OAA) to phosphoenolpyruvate (PEP) through direct phosphoryl transfer between the nucleoside triphosphate and OAA. This chain is Phosphoenolpyruvate carboxykinase (ATP), found in Shouchella clausii (strain KSM-K16) (Alkalihalobacillus clausii).